A 327-amino-acid chain; its full sequence is tRNA pseudouridine synthase B (327 aa).

Aspartate 83 (nucleophile) is an active-site residue.

It belongs to the pseudouridine synthase TruB family. Type 1 subfamily.

The enzyme catalyses uridine(55) in tRNA = pseudouridine(55) in tRNA. Functionally, responsible for synthesis of pseudouridine from uracil-55 in the psi GC loop of transfer RNAs. The protein is tRNA pseudouridine synthase B of Mesomycoplasma hyopneumoniae (strain 232) (Mycoplasma hyopneumoniae).